Here is a 206-residue protein sequence, read N- to C-terminus: Pyridoxine/pyridoxamine 5'-phosphate oxidase (206 aa).

FMN contacts are provided by residues 54-59, 69-70, R75, K76, and Q98; these read RVVLLK and YT. K59 is a binding site for substrate. Substrate-binding residues include Y116, R120, and S124. FMN contacts are provided by residues 133–134 and W178; that span reads QS. 184–186 provides a ligand contact to substrate; it reads RLH. R188 contributes to the FMN binding site.

Belongs to the pyridoxamine 5'-phosphate oxidase family. As to quaternary structure, homodimer. FMN serves as cofactor.

It carries out the reaction pyridoxamine 5'-phosphate + O2 + H2O = pyridoxal 5'-phosphate + H2O2 + NH4(+). It catalyses the reaction pyridoxine 5'-phosphate + O2 = pyridoxal 5'-phosphate + H2O2. It functions in the pathway cofactor metabolism; pyridoxal 5'-phosphate salvage; pyridoxal 5'-phosphate from pyridoxamine 5'-phosphate: step 1/1. The protein operates within cofactor metabolism; pyridoxal 5'-phosphate salvage; pyridoxal 5'-phosphate from pyridoxine 5'-phosphate: step 1/1. In terms of biological role, catalyzes the oxidation of either pyridoxine 5'-phosphate (PNP) or pyridoxamine 5'-phosphate (PMP) into pyridoxal 5'-phosphate (PLP). The sequence is that of Pyridoxine/pyridoxamine 5'-phosphate oxidase from Anaplasma phagocytophilum (strain HZ).